The chain runs to 867 residues: Ataxin-7 (867 aa).

Over residues 1-15 (MSERAADDVRGEPRR) the composition is skewed to basic and acidic residues. Residues 1–59 (MSERAADDVRGEPRRAAGGAAAARQQQQQPQPLQPQRQHPPLRRPRAEDGGTGDTTTSA) form a disordered region. The segment covering 16–39 (AAGGAAAARQQQQQPQPLQPQRQH) has biased composition (low complexity). K222 is modified (N6-acetyllysine). A Glycyl lysine isopeptide (Lys-Gly) (interchain with G-Cter in SUMO); alternate cross-link involves residue K243. K243 participates in a covalent cross-link: Glycyl lysine isopeptide (Lys-Gly) (interchain with G-Cter in SUMO2); alternate. Residues 320 to 387 (KRLSEREFDP…KAREKELIRH (68 aa)) enclose the SCA7 domain. Basic and acidic residues predominate over residues 379–400 (AREKELIRHDSQQVPHPLRDPH). 3 disordered regions span residues 379–483 (AREK…EESV), 600–711 (HGTT…SHSV), and 845–867 (TGNISGAQGLTNNSLLHQPKARP). Pro residues-rich tracts occupy residues 426 to 437 (PQTPSLPRPPGC) and 447 to 462 (IDPPPGQESPHPPLPA). Over residues 472–481 (EEGEGDDREE) the composition is skewed to acidic residues. A compositionally biased stretch (low complexity) spans 619–647 (SVQSRQVSASSSPPSTPSGLSSVPSSPLS). Residues 649–659 (KPQKWKPSKSI) show a composition bias toward basic residues. Polar residues predominate over residues 665 to 674 (SALSTNCHNA). The segment covering 689 to 711 (SSPLLVPSSSSSSSSSSSSSHSV) has biased composition (low complexity). Residues 846–860 (GNISGAQGLTNNSLL) show a composition bias toward polar residues.

This sequence belongs to the ataxin-7 family. In terms of assembly, component of the SAGA transcription coactivator-HAT complex, at least composed of SUPT3H, GCN5L2, TAF5L, TAF6L, SUPT7L, TADA3L, TAD1L, TAF10, TAF12, TRRAP, TAF9 and ATXN7. The STAGA core complex is associated with a subcomplex required for histone deubiquitination composed of ATXN7L3, ENY2 and USP22. Interacts with SORBS1, PSMC1 and CRX. Interacts with TRRAP, GCN5L2 and TAF10. Interacts with alpha tubulin. In terms of processing, proteolytically cleaved by caspase-7 (CASP7). Post-translationally, sumoylation has no effect on subcellular location or interaction with components of the STAGA complex. Widely expressed in adult tissues, with the highest expression in heart, brain, liver and kidney.

Its subcellular location is the nucleus. The protein resides in the nucleolus. It is found in the nucleus matrix. It localises to the cytoplasm. The protein localises to the cytoskeleton. Acts as a component of the SAGA (aka STAGA) transcription coactivator-HAT complex. Mediates the interaction of SAGA complex with the CRX and is involved in CRX-dependent gene activation. Probably involved in tethering the deubiquitination module within the SAGA complex. Necessary for microtubule cytoskeleton stabilization. Involved in neurodegeneration. The polypeptide is Ataxin-7 (Atxn7) (Mus musculus (Mouse)).